We begin with the raw amino-acid sequence, 139 residues long: Insulin-like growth factor (139 aa).

An N-terminal signal peptide occupies residues 1-38 (YIRRVRQGSIYSLLVESQQWCKLTLTLLLLLALLTRCT). The segment at 39–67 (LSETLCGSELVDTLQFVCDDRGFFFVPQH) is b. Residues 68-82 (VPPRRGAHRRSRARK) form a c region. An a region spans residues 83-103 (GIVEECCFKGCSLRLLEMYCA). The interval 104–113 (RPSKAERDVA) is d. The interval 108 to 139 (AERDVARPRQRPHRASQHSRRGSQSRGRGRSR) is disordered. Positions 114–139 (RPRQRPHRASQHSRRGSQSRGRGRSR) are e. The span at 115 to 139 (PRQRPHRASQHSRRGSQSRGRGRSR) shows a compositional bias: basic residues.

Belongs to the insulin family.

It is found in the secreted. The insulin-like growth factors, isolated from plasma, are structurally and functionally related to insulin but have a much higher growth-promoting activity. The protein is Insulin-like growth factor of Myxine glutinosa (Atlantic hagfish).